Reading from the N-terminus, the 698-residue chain is MSDPASTIPPAHHPTFWRERAVSYTAADITELDDVQHTRLRPAVNLGLDVLNTALREIVDNAIEEVADPGHGGSTVTITLHADGSVSVADDGRGLPVDTDPTTGKNGIVKTLGTARAGGKFSAHKDATSTGAGLNGIGAAAAVFISARTDVTVRRDGKTFLQSFGRGYPGVFEGKEFDPEAPFTRNDTQKLRGVSNRKPDLHGTEVRILFDPAIAPDSTLDIGEVLLRAHAAARMSPGVHLVVVDEGWPGEEVPPAVLEPFSGPWGTDTLLDLMCTAAGTPLPEVRAVVEGRGEYTTGRGPTPFRWSLTAGPAEPATVAAFCNTVRTPGGGSHLTAAIKGLSEALAERASRMRDLGLAKNEEGPEPQDFAAVTALAVDTRAPDVAWDSQAKTAVSSRSLNLAMAPDVARSVTIWAANPANADTVTLWSKLALESARARRSAEGAKARARAASKAKGLGTNLSLPPKLLPSRESGRGSGAELFLCEGDSALGTIKAARDATFQAAFPLKGKPPNVYGFPLNKARAKDEFDAIERILGCGVRDHCDPELCRYDRILFASDADPDGGNINSSLISMFLDFYRPLVEAGMVYVTMPPLFVVKAGDERIYCQDESERDAAVAQLKASSNRRVEVQRNKGLGEMDADDFWNTVLDPQRRTVIRVRPDESEKKLHHTLFGGPPEGRRTWMADVAARVDTSALDLT.

Residue lysine 429 forms an Isoglutamyl lysine isopeptide (Lys-Gln) (interchain with Q-Cter in protein Pup) linkage. Residues 443-473 (GAKARARAASKAKGLGTNLSLPPKLLPSRES) are disordered. One can recognise a Toprim domain in the interval 479–593 (AELFLCEGDS…AGMVYVTMPP (115 aa)).

This sequence belongs to the type II topoisomerase family. A complex of TopoN and TopoM, possibly a heterotetramer. Mg(2+) is required as a cofactor.

The enzyme catalyses ATP-dependent breakage, passage and rejoining of double-stranded DNA.. Inhibited by quinolone antibiotic ciprofloxacin and coumarin antibiotic novobiocin, but at much higher concentrations than is usual for DNA gyrase/topoisomerase. Functionally, catalyzes the relaxation of negatively supercoiled DNA in the presence of ATP or dATP but not other nucleotides. Individual subunits have no activity. Not able to negatively supercoil DNA, it can however introduce positive supercoils in DNA. Relaxes positive supercoils in an ATP-dependent manner. Catenates and decatenates DNA. Generates dsDNA breaks in the presence of the quinolone antibiotic ciprofloxacin, showing it is a topoisomerase. This is Topoisomerase subunit TopoN from Mycolicibacterium smegmatis (strain ATCC 700084 / mc(2)155) (Mycobacterium smegmatis).